Consider the following 316-residue polypeptide: Coiled-coil domain-containing protein 42 (316 aa).

2 coiled-coil regions span residues arginine 43–isoleucine 151 and histidine 182–isoleucine 236.

It belongs to the CFAP73 family. Interacts with ODF1 and ODF2. Interacts with CCDC38. Interacts with CCDC146. Interacts with CFAP53.

The protein localises to the cytoplasm. It localises to the perinuclear region. Its subcellular location is the cytoskeleton. It is found in the cell projection. The protein resides in the cilium. The protein localises to the flagellum. It localises to the microtubule organizing center. Its subcellular location is the centrosome. Its function is as follows. Essential for male fertility. Required for sperm development. The chain is Coiled-coil domain-containing protein 42 from Bos taurus (Bovine).